The primary structure comprises 428 residues: Adenylosuccinate synthetase (428 aa).

GTP is bound by residues 12-18 and 40-42; these read GDEGKGK and GHT. Residue D13 is the Proton acceptor of the active site. Mg(2+)-binding residues include D13 and G40. IMP contacts are provided by residues 13–16, 38–41, T128, R142, Q223, T238, and R302; these read DEGK and NAGH. The active-site Proton donor is H41. Residue 298 to 304 coordinates substrate; that stretch reads VTTGRPR. GTP contacts are provided by residues R304, 330 to 332, and 412 to 414; these read KLD and GTG.

It belongs to the adenylosuccinate synthetase family. In terms of assembly, homodimer. It depends on Mg(2+) as a cofactor.

It is found in the cytoplasm. The enzyme catalyses IMP + L-aspartate + GTP = N(6)-(1,2-dicarboxyethyl)-AMP + GDP + phosphate + 2 H(+). It functions in the pathway purine metabolism; AMP biosynthesis via de novo pathway; AMP from IMP: step 1/2. Plays an important role in the de novo pathway of purine nucleotide biosynthesis. Catalyzes the first committed step in the biosynthesis of AMP from IMP. The protein is Adenylosuccinate synthetase of Bifidobacterium adolescentis (strain ATCC 15703 / DSM 20083 / NCTC 11814 / E194a).